The chain runs to 602 residues: Threonine--tRNA ligase (602 aa).

Residues 208–499 form a catalytic region; the sequence is DHRKLGTELK…LTEHCAGEFP (292 aa). Zn(2+) contacts are provided by cysteine 300, histidine 351, and histidine 476.

It belongs to the class-II aminoacyl-tRNA synthetase family. In terms of assembly, homodimer. Requires Zn(2+) as cofactor.

The protein resides in the cytoplasm. The enzyme catalyses tRNA(Thr) + L-threonine + ATP = L-threonyl-tRNA(Thr) + AMP + diphosphate + H(+). Its function is as follows. Catalyzes the attachment of threonine to tRNA(Thr) in a two-step reaction: L-threonine is first activated by ATP to form Thr-AMP and then transferred to the acceptor end of tRNA(Thr). Also edits incorrectly charged L-seryl-tRNA(Thr). The protein is Threonine--tRNA ligase of Campylobacter jejuni subsp. jejuni serotype O:6 (strain 81116 / NCTC 11828).